A 240-amino-acid polypeptide reads, in one-letter code: Ubiquinone biosynthesis O-methyltransferase (240 aa).

Positions 44, 64, 85, and 129 each coordinate S-adenosyl-L-methionine.

It belongs to the methyltransferase superfamily. UbiG/COQ3 family.

The catalysed reaction is a 3-demethylubiquinol + S-adenosyl-L-methionine = a ubiquinol + S-adenosyl-L-homocysteine + H(+). The enzyme catalyses a 3-(all-trans-polyprenyl)benzene-1,2-diol + S-adenosyl-L-methionine = a 2-methoxy-6-(all-trans-polyprenyl)phenol + S-adenosyl-L-homocysteine + H(+). Its pathway is cofactor biosynthesis; ubiquinone biosynthesis. O-methyltransferase that catalyzes the 2 O-methylation steps in the ubiquinone biosynthetic pathway. This Escherichia coli O127:H6 (strain E2348/69 / EPEC) protein is Ubiquinone biosynthesis O-methyltransferase.